Consider the following 61-residue polypeptide: Large ribosomal subunit protein eL24 (61 aa).

The Zn(2+) site is built by C7, C10, C33, and C37. Residues 7–37 (CSFCGGDIPPATGMMHVRNDGTILWFCSNKC) form a C4-type zinc finger.

Belongs to the eukaryotic ribosomal protein eL24 family. Part of the 50S ribosomal subunit. Forms a cluster with proteins L3 and L14. It depends on Zn(2+) as a cofactor.

Functionally, binds to the 23S rRNA. The polypeptide is Large ribosomal subunit protein eL24 (Metallosphaera sedula (strain ATCC 51363 / DSM 5348 / JCM 9185 / NBRC 15509 / TH2)).